The sequence spans 351 residues: S-adenosylmethionine:tRNA ribosyltransferase-isomerase (351 aa).

Belongs to the QueA family. Monomer.

It localises to the cytoplasm. The enzyme catalyses 7-aminomethyl-7-carbaguanosine(34) in tRNA + S-adenosyl-L-methionine = epoxyqueuosine(34) in tRNA + adenine + L-methionine + 2 H(+). The protein operates within tRNA modification; tRNA-queuosine biosynthesis. Functionally, transfers and isomerizes the ribose moiety from AdoMet to the 7-aminomethyl group of 7-deazaguanine (preQ1-tRNA) to give epoxyqueuosine (oQ-tRNA). This chain is S-adenosylmethionine:tRNA ribosyltransferase-isomerase, found in Sphingopyxis alaskensis (strain DSM 13593 / LMG 18877 / RB2256) (Sphingomonas alaskensis).